We begin with the raw amino-acid sequence, 277 residues long: Myelin proteolipid protein (277 aa).

Over 2-10 the chain is Cytoplasmic; the sequence is GLLECCARC. Residues Cys6, Cys7, and Cys10 are each lipidated (S-palmitoyl cysteine). The helical transmembrane segment at 11–36 threads the bilayer; sequence LIGAPFASLVATGLCFFGVALFCGCG. Topologically, residues 37–59 are extracellular; it reads HEALTGTEQLIETYFSKNYQDYE. A helical membrane pass occupies residues 60–88; it reads FLIDVIHGFQYFIYGTAAFFFLYGALLLA. The Cytoplasmic portion of the chain corresponds to 89–151; the sequence is EGFYTTGAVR…LGKWLGHPDK (63 aa). 3 S-palmitoyl cysteine lipidation sites follow: Cys109, Cys139, and Cys141. A helical transmembrane segment spans residues 152–178; it reads FVGITYVLTIIWLLVFACSAVPVYIYF. Residues 179 to 238 are Extracellular-facing; it reads NTWTTCQSIGNPTKTSASIGTLCADARMYGILPWNAFPGKVCGSNLLSICKTSEFQMTFH. Intrachain disulfides connect Cys184–Cys228 and Cys201–Cys220. Thr199 carries O-palmitoyl threonine lipidation. Residues 239 to 268 traverse the membrane as a helical segment; it reads LFIAAFVGAAATLVSLVTFIIATTYNFAVL. The Cytoplasmic segment spans residues 269 to 277; it reads RLMGRGTKF.

Belongs to the myelin proteolipid protein family.

It localises to the cell membrane. This is the major myelin protein from the central nervous system. It plays an important role in the formation or maintenance of the multilamellar structure of myelin. This Taeniopygia guttata (Zebra finch) protein is Myelin proteolipid protein (PLP1).